Here is a 266-residue protein sequence, read N- to C-terminus: Small ribosomal subunit protein uS3 (266 aa).

The KH type-2 domain occupies 39-107; it reads VREYLKKKLK…PVHVNIEEIR (69 aa). The tract at residues 218 to 266 is disordered; that stretch reads EVAEDKRPRRNARPGDRRPRRDGEGGAPGARRGAPRRGAGKPEDGKTGE. Composition is skewed to basic and acidic residues over residues 230-241 and 257-266; these read RPGDRRPRRDGE and GKPEDGKTGE.

Belongs to the universal ribosomal protein uS3 family. In terms of assembly, part of the 30S ribosomal subunit. Forms a tight complex with proteins S10 and S14.

Its function is as follows. Binds the lower part of the 30S subunit head. Binds mRNA in the 70S ribosome, positioning it for translation. The polypeptide is Small ribosomal subunit protein uS3 (Burkholderia multivorans (strain ATCC 17616 / 249)).